Consider the following 637-residue polypeptide: MVKLMIRRLSSQVSKFVQPRLLETGTLRIALINCPNELSFCCERGFSAFSDRNLSYRERLRSGLVDIKADDAIDLFRDMIHSRPLPTVIDFSRLFSAIAKTKQYDLVLALCKQMELKGIAHNLYTLSIMINCFCRCRKLCLAFSAMGKIIKLGYEPNTITFSTLINGLCLEGRVSEALELVDRMVEMGHKPDLITINTLVNGLCLSGKEAEAMLLIDKMVEYGCQPNAVTYGPVLNVMCKSGQTALAMELLRKMEERNIKLDAVKYSIIIDGLCKHGSLDNAFNLFNEMEMKGITTNIITYNILIGGFCNAGRWDDGAKLLRDMIKRKINPNVVTFSVLIDSFVKEGKLREAEELHKEMIHRGIAPDTITYTSLIDGFCKENHLDKANQMVDLMVSKGCDPNIRTFNILINGYCKANRIDDGLELFRKMSLRGVVADTVTYNTLIQGFCELGKLNVAKELFQEMVSRKVPPNIVTYKILLDGLCDNGESEKALEIFEKIEKSKMELDIGIYNIIIHGMCNASKVDDAWDLFCSLPLKGVKPGVKTYNIMIGGLCKKGPLSEAELLFRKMEEDGHAPDGWTYNILIRAHLGDGDATKSVKLIEELKRCGFSVDASTIKMVIDMLSDGRLKKSFLDMLS.

The transit peptide at 1–95 (MVKLMIRRLS…PTVIDFSRLF (95 aa)) directs the protein to the mitochondrion. 15 PPR repeats span residues 87–121 (TVID…GIAH), 122–156 (NLYT…GYEP), 157–191 (NTIT…GHKP), 192–226 (DLIT…GCQP), 227–261 (NAVT…NIKL), 262–296 (DAVK…GITT), 297–331 (NIIT…KINP), 332–366 (NVVT…GIAP), 367–401 (DTIT…GCDP), 402–436 (NIRT…GVVA), 437–471 (DTVT…KVPP), 472–506 (NIVT…KMEL), 507–541 (DIGI…GVKP), 542–576 (GVKT…GHAP), and 577–611 (DGWT…GFSV).

Belongs to the PPR family. P subfamily.

The protein resides in the mitochondrion. This is Pentatricopeptide repeat-containing protein At1g12300, mitochondrial from Arabidopsis thaliana (Mouse-ear cress).